The chain runs to 349 residues: MDDLENNIFNSVEEEILYWKSVAMKYKQCSEEAQQELQEFQEASREYEAELEAQLLQTEGRNRDLFSENNRLRMELDAIKEKYEEQHSENYVQISTLEGDLSQTKAVRDQLQKYIRELEQANDDLERAKRATIMSLEDFEQRLNQAIERNAFLENELDEKENLLESVQRLKDEARDLRQELAVQQKQEKPKSNMVSPETERMDTSVQASIAIPSAPLTPLSQRGCASTLTSPLSFRTSLDDGYSGTPLTPCARISALNIVGDLLRKVGALESKLASCRNFVHEQSPNRPLTSVSARMKKTREGIENRLSIASGSSVEKGLIKRLEFGSFPSNTPMQGMHSPQGVVKMII.

Residues 22–189 (VAMKYKQCSE…ELAVQQKQEK (168 aa)) are a coiled coil.

Belongs to the nudE family. As to quaternary structure, self-associates. Interacts with pafah1b1. Phosphorylated in mitosis.

The protein resides in the cytoplasm. The protein localises to the cytoskeleton. It is found in the microtubule organizing center. Its subcellular location is the centrosome. It localises to the spindle. The protein resides in the chromosome. The protein localises to the centromere. It is found in the kinetochore. Its subcellular location is the cleavage furrow. It localises to the cytoplasmic vesicle membrane. Required for centrosome duplication and formation and function of the mitotic spindle. This Xenopus laevis (African clawed frog) protein is Nuclear distribution protein nudE homolog 1-A (nde1-a).